The following is a 70-amino-acid chain: DNA-directed RNA polymerase subunit omega (70 aa).

Belongs to the RNA polymerase subunit omega family. As to quaternary structure, the RNAP catalytic core consists of 2 alpha, 1 beta, 1 beta' and 1 omega subunit. When a sigma factor is associated with the core the holoenzyme is formed, which can initiate transcription.

It catalyses the reaction RNA(n) + a ribonucleoside 5'-triphosphate = RNA(n+1) + diphosphate. Promotes RNA polymerase assembly. Latches the N- and C-terminal regions of the beta' subunit thereby facilitating its interaction with the beta and alpha subunits. The polypeptide is DNA-directed RNA polymerase subunit omega (Bacillus cytotoxicus (strain DSM 22905 / CIP 110041 / 391-98 / NVH 391-98)).